The following is a 177-amino-acid chain: uncharacterized protein (177 aa).

This is an uncharacterized protein from Homo sapiens (Human).